The sequence spans 546 residues: Chaperonin GroEL (546 aa).

Residues 30-33 (TLGP), lysine 51, 87-91 (DGTTT), glycine 415, 479-481 (NAA), and aspartate 495 contribute to the ATP site. The tract at residues 526 to 546 (KKDEPAMPAGGGMGGMGGMDF) is disordered. Residues 534–546 (AGGGMGGMGGMDF) show a composition bias toward gly residues.

Belongs to the chaperonin (HSP60) family. Forms a cylinder of 14 subunits composed of two heptameric rings stacked back-to-back. Interacts with the co-chaperonin GroES.

It is found in the cytoplasm. The catalysed reaction is ATP + H2O + a folded polypeptide = ADP + phosphate + an unfolded polypeptide.. In terms of biological role, together with its co-chaperonin GroES, plays an essential role in assisting protein folding. The GroEL-GroES system forms a nano-cage that allows encapsulation of the non-native substrate proteins and provides a physical environment optimized to promote and accelerate protein folding. The chain is Chaperonin GroEL from Xanthomonas oryzae pv. oryzae (strain MAFF 311018).